Here is a 336-residue protein sequence, read N- to C-terminus: Coproporphyrin III ferrochelatase (336 aa).

Positions 52 and 116 each coordinate Fe-coproporphyrin III. Fe(2+) contacts are provided by histidine 172 and glutamate 255.

It belongs to the ferrochelatase family.

It localises to the cytoplasm. The enzyme catalyses Fe-coproporphyrin III + 2 H(+) = coproporphyrin III + Fe(2+). The protein operates within porphyrin-containing compound metabolism; protoheme biosynthesis. Functionally, involved in coproporphyrin-dependent heme b biosynthesis. Catalyzes the insertion of ferrous iron into coproporphyrin III to form Fe-coproporphyrin III. The chain is Coproporphyrin III ferrochelatase from Mycobacterium avium (strain 104).